We begin with the raw amino-acid sequence, 266 residues long: uncharacterized protein (266 aa).

Ser176 bears the Phosphoserine mark. Thr178 is modified (phosphothreonine).

This is an uncharacterized protein from Schizosaccharomyces pombe (strain 972 / ATCC 24843) (Fission yeast).